Here is a 392-residue protein sequence, read N- to C-terminus: MNDLNVLVLEDEPFQRLVAVTALKKVVPGSILEAADGKEAVAILESCGHVDIAICDLQMSGMDGLAFLRHASLSGKVHSVILSSEVDPILRQATISMIECLGLNFLGDLGKPFSLERITALLTRYNARRQDLPRQIEVAELPSVADVVRGLDNGEFEAYYQPKVALDGGGLIGAEVLARWNHPHLGVLPPSHFLYVMETYNLVDKLFWQLFSQGLATRRKLAQLGQPINLAFNVHPSQLGSRALAENISALLTEFHLPPSSVMFEITETGLISAPASSLENLVRLRIMGCGLAMDDFGAGYSSLDRLCEFPFSQIKLDRTFVQKMKTQPRSCAVISSVVALAQALGISLVVEGVESDEQRVRLIELGCSIAQGYLFARPMPEQHFLDYCSGS.

The Response regulatory domain maps to 5–126 (NVLVLEDEPF…RITALLTRYN (122 aa)). The residue at position 56 (D56) is a 4-aspartylphosphate. The region spanning 140–392 (ELPSVADVVR…QHFLDYCSGS (253 aa)) is the EAL domain. Mg(2+)-binding residues include E175, N233, E265, and D295. E352 serves as the catalytic Proton acceptor.

As to quaternary structure, homotetramer. Exhibits a highly unusual tetrameric structure arranged around a single dyad, with the four subunits adopting two distinctly different conformations, with only two active sites accessible for substrate binding. Interacts with RocS1. It depends on Mg(2+) as a cofactor.

The catalysed reaction is 3',3'-c-di-GMP + H2O = 5'-phosphoguanylyl(3'-&gt;5')guanosine + H(+). Its activity is regulated as follows. Phosphorylation of Asp-56 probably induces local conformational changes in the response regulatory domain. These structural changes are transmitted to the adjacent EAL domain, then the signal is further transmitted down to the active site. The phosphodiesterase activity is inhibited by Ca(2+) and Zn(2+). Phosphodiesterase activity is inhibited by a benzoisothiazolinone derivative that specifically inhibited RocR, but not some other phosphodiesterases. Functionally, phosphodiesterase (PDE) that catalyzes the hydrolysis of cyclic diguanylate (c-di-GMP) to 5'-pGpG. Cannot use cyclic AMP or cyclic GMP. Part of the RocSAR two-component regulatory signaling system (also known as the SadARS system), which regulates biofilm maturation, type III secretion and expression of the cup fimbrial-gene cluster. Negatively regulates the expression of cup genes by antagonizing the activity of RocA1. In Pseudomonas aeruginosa (strain ATCC 15692 / DSM 22644 / CIP 104116 / JCM 14847 / LMG 12228 / 1C / PRS 101 / PAO1), this protein is Cyclic di-GMP phosphodiesterase RocR.